Reading from the N-terminus, the 370-residue chain is GTPase Obg (370 aa).

In terms of domain architecture, Obg spans 1–159 (MKFIDEARIE…RMLRLELKVL (159 aa)). The disordered stretch occupies residues 127–146 (NLHFKSSTNRAPRQKTDGKP). In terms of domain architecture, OBG-type G spans 160–334 (ADVGLLGMPN…LCYAIYDYLA (175 aa)). Residues 166-173 (GMPNAGKS), 191-195 (FTTLA), 213-216 (DIPG), 284-287 (NKLD), and 315-317 (SAL) each bind GTP. Residues Ser-173 and Thr-193 each contribute to the Mg(2+) site. The segment at 350 to 370 (ADVRFRDAPPSDGGATSGGDA) is disordered.

It belongs to the TRAFAC class OBG-HflX-like GTPase superfamily. OBG GTPase family. As to quaternary structure, monomer. Requires Mg(2+) as cofactor.

Its subcellular location is the cytoplasm. An essential GTPase which binds GTP, GDP and possibly (p)ppGpp with moderate affinity, with high nucleotide exchange rates and a fairly low GTP hydrolysis rate. Plays a role in control of the cell cycle, stress response, ribosome biogenesis and in those bacteria that undergo differentiation, in morphogenesis control. The polypeptide is GTPase Obg (Burkholderia vietnamiensis (strain G4 / LMG 22486) (Burkholderia cepacia (strain R1808))).